Consider the following 88-residue polypeptide: Eclosion hormone (88 aa).

An N-terminal signal peptide occupies residues 1 to 26 (MANKLTAVIVVALAVAFMVNLDYANC). Cystine bridges form between Cys-40–Cys-64, Cys-44–Cys-60, and Cys-47–Cys-75.

It belongs to the insect eclosion hormone family.

The protein resides in the secreted. Its function is as follows. Neuropeptide that triggers the performance of ecdysis behaviors at the end of a molt. It triggers adult behavior patterns: larval, pupal and adult ecdysis, and plasticization during the molt. The chain is Eclosion hormone from Bombyx mori (Silk moth).